Reading from the N-terminus, the 334-residue chain is MNQAPVRVTVTGAAGRVAYALLFRIASGDMLGADQPVQLVLFDLPHAMKAMQGVVMELEDCAFPLLTEIIATDDPVLAFSDTQIALLVSARPRAVGAERLEVLADNAKIFAAQGAVIGRHANPDCKVLVVGNPCNTNACVAMKAAQKFSRIPARNFAALLRLDHNRALAQLALKTGRPVGGVKRLAVWGNHSPTVYADDRFTTIDGDSVPAIIDNIAWHHDTLVRTVDKRGEAILAARGLYAEASAASAAIDQMRDWWLGTRGEWTTMGVVSDGAYGVPAGLVFGFPVITDCRDYRIVPGLAVDAFARGMIDVNVRELTAELEIVKPLLPELFG.

12–18 (GAAGRVA) is a binding site for NAD(+). Substrate is bound by residues Arg-93 and Arg-99. NAD(+) contacts are provided by residues Asn-106, Gln-113, and 130-132 (VGN). The substrate site is built by Asn-132 and Arg-166. The active-site Proton acceptor is the His-191.

It belongs to the LDH/MDH superfamily. MDH type 2 family.

It catalyses the reaction (S)-malate + NAD(+) = oxaloacetate + NADH + H(+). Functionally, catalyzes the reversible oxidation of malate to oxaloacetate. In Albidiferax ferrireducens (strain ATCC BAA-621 / DSM 15236 / T118) (Rhodoferax ferrireducens), this protein is Malate dehydrogenase 2.